The chain runs to 110 residues: Putative caspase recruitment domain-containing protein 17P (110 aa).

The CARD domain occupies 1–91 (MADKVLKEKR…HLAGTLGLSA (91 aa)).

In terms of assembly, interacts with pro-CASP1. Ubiquitous.

It is found in the cytoplasm. In terms of biological role, regulator of procaspase-1/CASP1 activation implicated in the regulation of the proteolytic maturation of pro-IL-1beta/IL1B and its release during inflammation. Inhibits the release of IL1B in response to LPS in monocytes. However, unlike CASP1, do not induce NF-kappa-B activation. This Homo sapiens (Human) protein is Putative caspase recruitment domain-containing protein 17P (CARD17P).